A 119-amino-acid polypeptide reads, in one-letter code: MGKASHSSTAQDAVALFDSLRSAYSATPTTLKIIDLYIGFAVSTALIQVVYMAIVGSFPFNSFLSGVLSCIGTAVLAVCLRIQVNKENKEFKDLAPERAFADFVLCNLVLHMVIMNFLG.

Residues Met-1–Asp-35 are Cytoplasmic-facing. A helical membrane pass occupies residues Leu-36–Gly-56. At Ser-57 to Pro-59 the chain is on the lumenal side. A helical membrane pass occupies residues Phe-60–Leu-80. The Cytoplasmic segment spans residues Arg-81–Arg-98. Residues Ala-99 to Gly-119 traverse the membrane as a helical segment.

This sequence belongs to the DAD/OST2 family. In terms of assembly, component of the oligosaccharyltransferase (OST) complex.

It localises to the endoplasmic reticulum membrane. It functions in the pathway protein modification; protein glycosylation. Functionally, subunit of the oligosaccharyl transferase (OST) complex that catalyzes the initial transfer of a defined glycan (Glc(3)Man(9)GlcNAc(2) in eukaryotes) from the lipid carrier dolichol-pyrophosphate to an asparagine residue within an Asn-X-Ser/Thr consensus motif in nascent polypeptide chains, the first step in protein N-glycosylation. N-glycosylation occurs cotranslationally and the complex associates with the Sec61 complex at the channel-forming translocon complex that mediates protein translocation across the endoplasmic reticulum (ER). All subunits are required for a maximal enzyme activity. The sequence is that of Dolichyl-diphosphooligosaccharide--protein glycosyltransferase subunit DAD1 (DAD1) from Malus domestica (Apple).